The primary structure comprises 102 residues: Small ribosomal subunit protein uS10 (102 aa).

This sequence belongs to the universal ribosomal protein uS10 family. In terms of assembly, part of the 30S ribosomal subunit.

In terms of biological role, involved in the binding of tRNA to the ribosomes. The chain is Small ribosomal subunit protein uS10 from Lactococcus lactis subsp. lactis (strain IL1403) (Streptococcus lactis).